Here is a 262-residue protein sequence, read N- to C-terminus: tRNA pseudouridine synthase A (262 aa).

Asp51 serves as the catalytic Nucleophile. Tyr106 is a binding site for substrate.

This sequence belongs to the tRNA pseudouridine synthase TruA family.

It carries out the reaction uridine(38/39/40) in tRNA = pseudouridine(38/39/40) in tRNA. Formation of pseudouridine at positions 38, 39 and 40 in the anticodon stem and loop of transfer RNAs. The polypeptide is tRNA pseudouridine synthase A (Pyrococcus horikoshii (strain ATCC 700860 / DSM 12428 / JCM 9974 / NBRC 100139 / OT-3)).